The following is a 459-amino-acid chain: Phosphoenolpyruvate carboxylase (459 aa).

It belongs to the PEPCase type 2 family. As to quaternary structure, homotetramer. Mg(2+) is required as a cofactor.

The enzyme catalyses oxaloacetate + phosphate = phosphoenolpyruvate + hydrogencarbonate. In terms of biological role, catalyzes the irreversible beta-carboxylation of phosphoenolpyruvate (PEP) to form oxaloacetate (OAA), a four-carbon dicarboxylic acid source for the tricarboxylic acid cycle. The polypeptide is Phosphoenolpyruvate carboxylase (Pyrobaculum calidifontis (strain DSM 21063 / JCM 11548 / VA1)).